Consider the following 397-residue polypeptide: Polyphosphatase (397 aa).

The Mg(2+) site is built by D41, D127, and H148. The Mn(2+) site is built by D41, D127, and H148. 3 residues coordinate ATP: H149, S286, and R381.

The protein belongs to the PPase class C family. Mn(2+) serves as cofactor. Mg(2+) is required as a cofactor.

It catalyses the reaction [phosphate](n) + H2O = [phosphate](n-1) + phosphate + H(+). In terms of biological role, polyphosphatase (polyPase) involved in the degradation of inorganic polyphosphates (polyP) that is able to degrade a range of chains from three to several hundreds of residues in a highly processive manner. Exclusively shows exopolyphosphatase activity, cleaving inside the polyP chain. The polypeptide is Polyphosphatase (Saccharomyces cerevisiae (strain ATCC 204508 / S288c) (Baker's yeast)).